The chain runs to 1481 residues: Cystic fibrosis transmembrane conductance regulator (1481 aa).

At 1–77 (MQRSPLEKAS…KLINALRRCF (77 aa)) the chain is on the cytoplasmic side. A helical membrane pass occupies residues 78 to 98 (FWRFMFYGIILYLGEVTKAVQ). The ABC transmembrane type-1 1 domain maps to 81-365 (FMFYGIILYL…WAVQTWYDSL (285 aa)). At 99–122 (PLLLGRIIASYDPDNKAERSIAIY) the chain is on the extracellular side. Residues 123 to 146 (LGIGLCLLFIVRTLLLHPAIFGLH) traverse the membrane as a helical segment. Residues 147–195 (HIGMQMRIAMFSLIYKKTLKLSSRVLDKISIGQLVSLLSNNLNKFDEGL) lie on the Cytoplasmic side of the membrane. Residues 196–216 (ALAHFVWIAPLQVTLLMGLLW) traverse the membrane as a helical segment. The Extracellular segment spans residues 217-222 (ELLQAF). A helical membrane pass occupies residues 223 to 243 (TFCGLAFLVVLAFLQAGLGKM). The Cytoplasmic segment spans residues 244-298 (MMKYRDQRAGKINERLVITSEIIENIQSVKAYCWEEAMEKIIENLRQTELKLTRK). The helical transmembrane segment at 299-319 (AAYVRYLNSSAFFFSGFFVVF) threads the bilayer. At 320–339 (LSVLPYALLKGIILRKIFTT) the chain is on the extracellular side. The chain crosses the membrane as a helical span at residues 340-358 (ISFCIVLRMAVTRQFPWAV). The Cytoplasmic portion of the chain corresponds to 359 to 858 (QTWYDSLGAI…YLRYITVHKS (500 aa)). Residues Trp-401, 457–464 (GSTGAGKT), and Gln-492 contribute to the ATP site. One can recognise an ABC transporter 1 domain in the interval 423-645 (NGDNNLFFSN…RPDFSSKLMG (223 aa)). Residue Cys-523 is the site of S-palmitoyl cysteine attachment. Residues Ser-548 and Ser-659 each carry the phosphoserine modification. The tract at residues 653–831 (TAERRNSIIT…EEINEEDLRD (179 aa)) is disordered R region. At Ser-669 the chain carries Phosphoserine; by PKA. At Ser-685 the chain carries Phosphoserine. A Glycyl lysine isopeptide (Lys-Gly) (interchain with G-Cter in ubiquitin) cross-link involves residue Lys-687. Residues Ser-699 and Ser-711 each carry the phosphoserine modification. Thr-716 is modified (phosphothreonine). Ser-736, Ser-767, Ser-790, Ser-795, and Ser-813 each carry phosphoserine. A helical membrane pass occupies residues 859–879 (LMFVLIWCLVVFLAEVAASLV). Residues 859-1155 (LMFVLIWCLV…AVNSSIDVDS (297 aa)) form the ABC transmembrane type-1 2 domain. The Extracellular segment spans residues 880–918 (VLCLFPKILFQDKGNSTKSANNSYAVIITSTSSYYIFYI). Residues Asn-894 and Asn-900 are each glycosylated (N-linked (GlcNAc...) asparagine). Residues 919–939 (YVGVADTLLALGLFRGLPLVH) traverse the membrane as a discontinuously helical segment. Residues 940 to 990 (TLITVSKTLHHKMLQSVLQAPMSTLNTLKTGGILNRFSKDIAVLDDLLPLT) lie on the Cytoplasmic side of the membrane. A helical transmembrane segment spans residues 991 to 1011 (IFDFVQLLLIVIGAVVVVSVL). Over 1012–1013 (QP) the chain is Extracellular. A helical transmembrane segment spans residues 1014–1034 (YIFLATVPVIAAFILLRAYFL). The Cytoplasmic segment spans residues 1035-1095 (HTSQQLKQLE…TANWFLYLST (61 aa)). Residues 1096–1116 (LRWFQMRIEMIFVIFFIAVTF) traverse the membrane as a helical segment. The Extracellular portion of the chain corresponds to 1117–1130 (ISILTTGEGEGRVG). A helical transmembrane segment spans residues 1131-1151 (IILTLAMNIMGTLQWAVNSSI). Over 1152–1481 (DVDSLMRSVS…TEEEVQETKI (330 aa)) the chain is Cytoplasmic. One can recognise an ABC transporter 2 domain in the interval 1211–1444 (MTVKDLTAKY…KSLFRQAISP (234 aa)). Residues Tyr-1220 and 1245-1252 (GRTGSGKS) contribute to the ATP site. The interaction with GORASP2 stretch occupies residues 1387–1481 (RTLKQAFADC…TEEEVQETKI (95 aa)). Cys-1396 is lipidated: S-palmitoyl cysteine. The tract at residues 1452-1481 (PQRNSSRQKSRSNIAALKEETEEEVQETKI) is disordered. Low complexity predominate over residues 1453 to 1464 (QRNSSRQKSRSN). Ser-1457 carries the post-translational modification Phosphoserine. A compositionally biased stretch (acidic residues) spans 1471-1481 (ETEEEVQETKI). Positions 1479–1481 (TKI) match the PDZ-binding motif.

Belongs to the ABC transporter superfamily. ABCC family. CFTR transporter (TC 3.A.1.202) subfamily. In terms of assembly, monomer; does not require oligomerization for channel activity. May form oligomers in the membrane. Interacts with SLC26A3, SLC26A6 and NHERF1. Interacts with SHANK2. Interacts with MYO6. Interacts (via C-terminus) with GOPC (via PDZ domain); this promotes CFTR internalization and thereby decreases channel activity. Interacts with SLC4A7 through NHERF1. Found in a complex with MYO5B and RAB11A. Interacts with ANO1. Interacts with SLC26A8. Interacts with AHCYL1; the interaction increases CFTR activity. Interacts with CSE1L. The core-glycosylated form interacts with GORASP2 (via PDZ GRASP-type 1 domain) in respone to ER stress. Interacts with MARCHF2; the interaction leads to CFTR ubiqtuitination and degradation. Interacts with ADGRG2. Post-translationally, N-glycosylated. In terms of processing, phosphorylated; cAMP treatment promotes phosphorylation and activates the channel. Dephosphorylation decreases the ATPase activity (in vitro). Phosphorylation at PKA sites activates the channel. Phosphorylation at PKC sites enhances the response to phosphorylation by PKA. Phosphorylated by AMPK; this inhibits channel activity. Ubiquitinated, leading to its degradation in the lysosome. Deubiquitination by USP10 in early endosomes enhances its endocytic recycling to the cell membrane. Ubiquitinated by RNF185 during ER stress. Ubiquitinated by MARCHF2.

It is found in the apical cell membrane. The protein localises to the early endosome membrane. Its subcellular location is the cell membrane. It localises to the recycling endosome membrane. The protein resides in the endoplasmic reticulum membrane. It is found in the nucleus. It carries out the reaction ATP + H2O + closed Cl(-) channel = ADP + phosphate + open Cl(-) channel.. The enzyme catalyses chloride(in) = chloride(out). It catalyses the reaction hydrogencarbonate(in) = hydrogencarbonate(out). The catalysed reaction is ATP + H2O = ADP + phosphate + H(+). Epithelial ion channel that plays an important role in the regulation of epithelial ion and water transport and fluid homeostasis. Mediates the transport of chloride ions across the cell membrane. Possesses an intrinsic ATPase activity and utilizes ATP to gate its channel; the passive flow of anions through the channel is gated by cycles of ATP binding and hydrolysis by the ATP-binding domains. The ion channel is also permeable to HCO(3)(-); selectivity depends on the extracellular chloride concentration. Exerts its function also by modulating the activity of other ion channels and transporters. Contributes to the regulation of the pH and the ion content of the epithelial fluid layer. Modulates the activity of the epithelial sodium channel (ENaC) complex, in part by regulating the cell surface expression of the ENaC complex. May regulate bicarbonate secretion and salvage in epithelial cells by regulating the transporter SLC4A7. Can inhibit the chloride channel activity of ANO1. Plays a role in the chloride and bicarbonate homeostasis during sperm epididymal maturation and capacitation. The protein is Cystic fibrosis transmembrane conductance regulator of Muntiacus reevesi (Reeves' muntjac).